Here is a 212-residue protein sequence, read N- to C-terminus: Methylthioribulose-1-phosphate dehydratase (212 aa).

The Zn(2+) site is built by H97 and H99.

The protein belongs to the aldolase class II family. MtnB subfamily. Homotetramer. The cofactor is Zn(2+).

The enzyme catalyses 5-(methylsulfanyl)-D-ribulose 1-phosphate = 5-methylsulfanyl-2,3-dioxopentyl phosphate + H2O. It participates in amino-acid biosynthesis; L-methionine biosynthesis via salvage pathway; L-methionine from S-methyl-5-thio-alpha-D-ribose 1-phosphate: step 2/6. Functionally, catalyzes the dehydration of methylthioribulose-1-phosphate (MTRu-1-P) into 2,3-diketo-5-methylthiopentyl-1-phosphate (DK-MTP-1-P). The chain is Methylthioribulose-1-phosphate dehydratase from Bacillus cereus (strain AH187).